A 101-amino-acid polypeptide reads, in one-letter code: Small ribosomal subunit protein uS10 (101 aa).

This sequence belongs to the universal ribosomal protein uS10 family. Part of the 30S ribosomal subunit.

Functionally, involved in the binding of tRNA to the ribosomes. This is Small ribosomal subunit protein uS10 from Flavobacterium psychrophilum (strain ATCC 49511 / DSM 21280 / CIP 103535 / JIP02/86).